A 396-amino-acid polypeptide reads, in one-letter code: Flavohemoprotein (396 aa).

Positions 1–136 (MLDAQTIATV…LANVFINREA (136 aa)) constitute a Globin domain. Position 85 (H85) interacts with heme b. Catalysis depends on charge relay system residues Y95 and E135. Positions 147–396 (GGWEGTRDFR…YECFGPHKVL (250 aa)) are reductase. The region spanning 150 to 255 (EGTRDFRIVA…VAPAGDFFMA (106 aa)) is the FAD-binding FR-type domain. FAD-binding positions include Y188 and 204-207 (RQYS). Residue 268-273 (GVGQTP) coordinates NADP(+). FAD is bound at residue 389–392 (CFGP).

Belongs to the globin family. Two-domain flavohemoproteins subfamily. This sequence in the C-terminal section; belongs to the flavoprotein pyridine nucleotide cytochrome reductase family. In terms of assembly, monomer. FAD serves as cofactor. Requires heme b as cofactor.

It is found in the cytoplasm. It catalyses the reaction 2 nitric oxide + NADPH + 2 O2 = 2 nitrate + NADP(+) + H(+). The catalysed reaction is 2 nitric oxide + NADH + 2 O2 = 2 nitrate + NAD(+) + H(+). In terms of biological role, is involved in NO detoxification in an aerobic process, termed nitric oxide dioxygenase (NOD) reaction that utilizes O(2) and NAD(P)H to convert NO to nitrate, which protects the bacterium from various noxious nitrogen compounds. Therefore, plays a central role in the inducible response to nitrosative stress. In the presence of oxygen and NADH, HMP has NADH oxidase activity, which leads to the generation of superoxide and H(2)O(2), both in vitro and in vivo, and it has been suggested that HMP might act as an amplifier of superoxide stress. Under anaerobic conditions, HMP also exhibits nitric oxide reductase and FAD reductase activities. However, all these reactions are much lower than NOD activity. Functionally, various electron acceptors are also reduced by HMP in vitro, including dihydropterine, ferrisiderophores, ferric citrate, cytochrome c, nitrite, S-nitrosoglutathione, and alkylhydroperoxides. However, it is unknown if these reactions are of any biological significance in vivo. The polypeptide is Flavohemoprotein (hmp) (Escherichia coli (strain K12)).